The following is a 349-amino-acid chain: Homeobox-leucine zipper protein HOX7 (349 aa).

The segment at 42–186 (RATRRDEQDD…PKQKSDLANR (145 aa)) is disordered. Composition is skewed to polar residues over residues 89–99 (SAETGSANSEM) and 121–135 (SSPS…RQQV). The segment at residues 150-209 (GARKKLRLSKEQSSFLEDSFKEHSTLTPKQKSDLANRLNLRPRQVEVWFQNRRARTKLKQ) is a DNA-binding region (homeobox). The segment covering 167–183 (DSFKEHSTLTPKQKSDL) has biased composition (basic and acidic residues). Residues 208–252 (KQTEVDCEHLKRCCERLTRENRRLQREVAELRGALRTTTSSYPPL) are leucine-zipper.

This sequence belongs to the HD-ZIP homeobox family. Class II subfamily. Homodimer. May form a heterodimer with HOX1, HOX2 or HOX3. Expressed in seedlings, roots, leaves, nodes, internodes, flowers and embryo.

It localises to the nucleus. In terms of biological role, probable transcription factor that binds to the DNA sequence 5'-CAAT[GC]ATTG-3'. In Oryza sativa subsp. indica (Rice), this protein is Homeobox-leucine zipper protein HOX7 (HOX7).